The following is a 123-amino-acid chain: SGSCATKTCWMMLPKFREVGYALKDKYSEAEYVEPVRASRYRRPVFLKIKKSSTYRKPMDTDLVYIMNSPNYCEEDPVSGSVGTRGRLCNRTSPGAAGCDLMCCGRGYNTHQYKKMWQCNCKF.

Residue serine 1 is the site of O-palmitoleoyl serine; by PORCN attachment. Cysteine 89 and cysteine 104 are disulfide-bonded. A glycan (N-linked (GlcNAc...) asparagine) is linked at asparagine 90. The Microbody targeting signal signature appears at 121 to 123 (CKF).

Belongs to the Wnt family. Palmitoleoylation is required for efficient binding to frizzled receptors. Depalmitoleoylation leads to Wnt signaling pathway inhibition.

It is found in the secreted. It localises to the extracellular space. Its subcellular location is the extracellular matrix. Ligand for members of the frizzled family of seven transmembrane receptors. Probable developmental protein. May be a signaling molecule which affects the development of discrete regions of tissues. Is likely to signal over only few cell diameters. The protein is Protein Wnt-7(I) (WNT-7(I)) of Eptatretus stoutii (Pacific hagfish).